We begin with the raw amino-acid sequence, 181 residues long: 3-hydroxyanthranilate 3,4-dioxygenase (181 aa).

Residue arginine 46 coordinates O2. Residues histidine 50, glutamate 56, and histidine 95 each coordinate Fe cation. Glutamate 56 provides a ligand contact to substrate. Residues arginine 99 and glutamate 109 each coordinate substrate.

This sequence belongs to the 3-HAO family. Fe(2+) is required as a cofactor.

The protein localises to the cytoplasm. The catalysed reaction is 3-hydroxyanthranilate + O2 = (2Z,4Z)-2-amino-3-carboxymuconate 6-semialdehyde. It participates in cofactor biosynthesis; NAD(+) biosynthesis; quinolinate from L-kynurenine: step 3/3. Its function is as follows. Catalyzes the oxidative ring opening of 3-hydroxyanthranilate to 2-amino-3-carboxymuconate semialdehyde, which spontaneously cyclizes to quinolinate. The chain is 3-hydroxyanthranilate 3,4-dioxygenase from Mycosarcoma maydis (Corn smut fungus).